The sequence spans 365 residues: Cobalt-precorrin-5B C(1)-methyltransferase (365 aa).

Belongs to the CbiD family.

It carries out the reaction Co-precorrin-5B + S-adenosyl-L-methionine = Co-precorrin-6A + S-adenosyl-L-homocysteine. Its pathway is cofactor biosynthesis; adenosylcobalamin biosynthesis; cob(II)yrinate a,c-diamide from sirohydrochlorin (anaerobic route): step 6/10. Its function is as follows. Catalyzes the methylation of C-1 in cobalt-precorrin-5B to form cobalt-precorrin-6A. This is Cobalt-precorrin-5B C(1)-methyltransferase from Clostridium perfringens (strain ATCC 13124 / DSM 756 / JCM 1290 / NCIMB 6125 / NCTC 8237 / Type A).